The sequence spans 80 residues: RNA-binding protein Hfq (80 aa).

Residues D9–V69 enclose the Sm domain.

It belongs to the Hfq family. As to quaternary structure, homohexamer.

Its function is as follows. RNA chaperone that binds small regulatory RNA (sRNAs) and mRNAs to facilitate mRNA translational regulation in response to envelope stress, environmental stress and changes in metabolite concentrations. Also binds with high specificity to tRNAs. This chain is RNA-binding protein Hfq, found in Alkaliphilus oremlandii (strain OhILAs) (Clostridium oremlandii (strain OhILAs)).